The primary structure comprises 664 residues: UvrABC system protein B (664 aa).

The 159-residue stretch at A24 to N182 folds into the Helicase ATP-binding domain. G37–T44 lines the ATP pocket. The Beta-hairpin motif lies at Y90–I113. In terms of domain architecture, Helicase C-terminal spans Q427 to T593. The region spanning L624 to A659 is the UVR domain.

The protein belongs to the UvrB family. As to quaternary structure, forms a heterotetramer with UvrA during the search for lesions. Interacts with UvrC in an incision complex.

It is found in the cytoplasm. In terms of biological role, the UvrABC repair system catalyzes the recognition and processing of DNA lesions. A damage recognition complex composed of 2 UvrA and 2 UvrB subunits scans DNA for abnormalities. Upon binding of the UvrA(2)B(2) complex to a putative damaged site, the DNA wraps around one UvrB monomer. DNA wrap is dependent on ATP binding by UvrB and probably causes local melting of the DNA helix, facilitating insertion of UvrB beta-hairpin between the DNA strands. Then UvrB probes one DNA strand for the presence of a lesion. If a lesion is found the UvrA subunits dissociate and the UvrB-DNA preincision complex is formed. This complex is subsequently bound by UvrC and the second UvrB is released. If no lesion is found, the DNA wraps around the other UvrB subunit that will check the other stand for damage. This chain is UvrABC system protein B, found in Chloroflexus aggregans (strain MD-66 / DSM 9485).